A 286-amino-acid polypeptide reads, in one-letter code: MTHLTQLEIIIEKAFDDRDSINTTTKGEIRESVEHTLSLLDKGEIRVAERQKNGQWYVHQWLKKAVLLSFRLNPMQIITGGINGTHWWDKVPSKFSGWKEDDFQKAGFRSVPGAIVRHSAYVAPNVILMPSFINLGAFVDEGTMVDTWTTVGSCAQIGKHVHLSGGVGIGGVLEPLQANPTIIEDHCFIGARSEVVEGCIIREGAVLGMGVFIGQSTKIIDRTTGEIFIGEVPAYSVVVPGSLPGKPLPNGEAGPNLYCAVIVKRVDQKTREKTSINELLRDETQC.

The substrate site is built by R109 and D146.

The protein belongs to the transferase hexapeptide repeat family. In terms of assembly, homotrimer.

Its subcellular location is the cytoplasm. It catalyses the reaction (S)-2,3,4,5-tetrahydrodipicolinate + succinyl-CoA + H2O = (S)-2-succinylamino-6-oxoheptanedioate + CoA. It participates in amino-acid biosynthesis; L-lysine biosynthesis via DAP pathway; LL-2,6-diaminopimelate from (S)-tetrahydrodipicolinate (succinylase route): step 1/3. This Bartonella tribocorum (strain CIP 105476 / IBS 506) protein is 2,3,4,5-tetrahydropyridine-2,6-dicarboxylate N-succinyltransferase.